We begin with the raw amino-acid sequence, 168 residues long: uncharacterized protein (168 aa).

Residues 19-80 (LDKLDRHILN…VVSPKAVGRT (62 aa)) enclose the HTH asnC-type domain. The segment at residues 38–57 (LKELSEKVNSSVATCQRRVQ) is a DNA-binding region (H-T-H motif).

This is an uncharacterized protein from Haemophilus influenzae (strain ATCC 51907 / DSM 11121 / KW20 / Rd).